The following is a 244-amino-acid chain: Pyridoxine 5'-phosphate synthase (244 aa).

N7 provides a ligand contact to 3-amino-2-oxopropyl phosphate. Residue 9–10 (DH) coordinates 1-deoxy-D-xylulose 5-phosphate. R18 serves as a coordination point for 3-amino-2-oxopropyl phosphate. H43 (proton acceptor) is an active-site residue. Residues R45 and H50 each coordinate 1-deoxy-D-xylulose 5-phosphate. E70 serves as the catalytic Proton acceptor. 1-deoxy-D-xylulose 5-phosphate is bound at residue T100. Catalysis depends on H191, which acts as the Proton donor. 3-amino-2-oxopropyl phosphate contacts are provided by residues G192 and 213-214 (GH).

It belongs to the PNP synthase family. As to quaternary structure, homooctamer; tetramer of dimers.

Its subcellular location is the cytoplasm. It catalyses the reaction 3-amino-2-oxopropyl phosphate + 1-deoxy-D-xylulose 5-phosphate = pyridoxine 5'-phosphate + phosphate + 2 H2O + H(+). It functions in the pathway cofactor biosynthesis; pyridoxine 5'-phosphate biosynthesis; pyridoxine 5'-phosphate from D-erythrose 4-phosphate: step 5/5. Its function is as follows. Catalyzes the complicated ring closure reaction between the two acyclic compounds 1-deoxy-D-xylulose-5-phosphate (DXP) and 3-amino-2-oxopropyl phosphate (1-amino-acetone-3-phosphate or AAP) to form pyridoxine 5'-phosphate (PNP) and inorganic phosphate. The protein is Pyridoxine 5'-phosphate synthase of Laribacter hongkongensis (strain HLHK9).